The following is a 548-amino-acid chain: Probable bifunctional tRNA threonylcarbamoyladenosine biosynthesis protein (548 aa).

Residues 1-338 (MRILGIEGTA…FRPDEVAVTW (338 aa)) are kae1. 2 residues coordinate Fe cation: His122 and His126. Residues 143–147 (NASGA), Asp175, Gly188, Glu192, and Asn271 each bind L-threonylcarbamoyladenylate. Asp299 contacts Fe cation. Residues 349-548 (RMGGDEVQGA…DDIEGRGRYQ (200 aa)) enclose the Protein kinase domain. ATP contacts are provided by residues 355-362 (VQGAEATV) and Lys371. Positions 390–404 (ERTRQEARLTSEARR) are enriched in basic and acidic residues. The disordered stretch occupies residues 390-413 (ERTRQEARLTSEARRNGVPTPLVR). Asp460 acts as the Proton acceptor; for kinase activity in catalysis.

The protein in the N-terminal section; belongs to the KAE1 / TsaD family. This sequence in the C-terminal section; belongs to the protein kinase superfamily. Tyr protein kinase family. BUD32 subfamily. Component of the KEOPS complex that consists of Kae1, Bud32, Cgi121 and Pcc1; the whole complex dimerizes. Fe(2+) serves as cofactor.

The protein localises to the cytoplasm. It carries out the reaction L-seryl-[protein] + ATP = O-phospho-L-seryl-[protein] + ADP + H(+). The enzyme catalyses L-threonyl-[protein] + ATP = O-phospho-L-threonyl-[protein] + ADP + H(+). The catalysed reaction is L-threonylcarbamoyladenylate + adenosine(37) in tRNA = N(6)-L-threonylcarbamoyladenosine(37) in tRNA + AMP + H(+). Functionally, required for the formation of a threonylcarbamoyl group on adenosine at position 37 (t(6)A37) in tRNAs that read codons beginning with adenine. Is a component of the KEOPS complex that is probably involved in the transfer of the threonylcarbamoyl moiety of threonylcarbamoyl-AMP (TC-AMP) to the N6 group of A37. The Kae1 domain likely plays a direct catalytic role in this reaction. The Bud32 domain probably displays kinase activity that regulates Kae1 function. The protein is Probable bifunctional tRNA threonylcarbamoyladenosine biosynthesis protein of Haloarcula marismortui (strain ATCC 43049 / DSM 3752 / JCM 8966 / VKM B-1809) (Halobacterium marismortui).